Here is a 480-residue protein sequence, read N- to C-terminus: Major facilitator superfamily domain-containing protein 12 (480 aa).

An N-acetylmethionine modification is found at M1. Residues M1–A26 are Cytoplasmic-facing. The chain crosses the membrane as a helical span at residues V27 to L47. Topologically, residues H48–R56 are lumenal. A helical transmembrane segment spans residues G57–G77. Topologically, residues Y78–H97 are cytoplasmic. Residues L98 to C118 traverse the membrane as a helical segment. The Lumenal segment spans residues G119–E124. The chain crosses the membrane as a helical span at residues W125–T145. Residues Q146–R170 lie on the Cytoplasmic side of the membrane. The helical transmembrane segment at Y171–L191 threads the bilayer. Topologically, residues Q192–R218 are lumenal. The helical transmembrane segment at N219–T239 threads the bilayer. The Cytoplasmic portion of the chain corresponds to R240–Q279. T254 is subject to Phosphothreonine; by MTOR. The helical transmembrane segment at V280–L302 threads the bilayer. The Lumenal segment spans residues T303–K310. Residues K311 to M331 form a helical membrane-spanning segment. At K332–G347 the chain is on the cytoplasmic side. 2 consecutive transmembrane segments (helical) span residues L348–V368 and Y369–M389. The Cytoplasmic portion of the chain corresponds to T390–A402. The helical transmembrane segment at F403–I423 threads the bilayer. Over Q424–M446 the chain is Lumenal. Residues V447–W467 form a helical membrane-spanning segment. At P468 to P480 the chain is on the cytoplasmic side.

Belongs to the major facilitator superfamily. Phosphorylation at Thr-254 by MTOR via mTORC1 pathway promotes cysteine transport in lysosomes, thereby regulating lysosomal cysteine and cystine storage and redox homeostasis. In terms of tissue distribution, widely expressed, with high expression in primary melanocytes.

The protein localises to the melanosome membrane. The protein resides in the lysosome membrane. It carries out the reaction L-cysteine(in) = L-cysteine(out). Its function is as follows. Transporter that mediates the import of cysteine into melanosomes, thereby regulating skin pigmentation. In melanosomes, cysteine import is required both for normal levels of cystine, the oxidized dimer of cysteine, and provide cysteine for the production of the cysteinyldopas used in pheomelanin synthesis, thereby regulating skin pigmentation. Also catalyzes import of cysteine into lysosomes in non-pigmented cells, regulating lysosomal cystine and cysteine storage, which is essnetial for redox homeostasis. The protein is Major facilitator superfamily domain-containing protein 12 of Homo sapiens (Human).